The chain runs to 120 residues: Transcription elongation factor 1 homolog (120 aa).

4 residues coordinate Zn(2+): Cys25, Cys28, Cys49, and Cys52. Residues 84–110 show a composition bias toward acidic residues; that stretch reads EDDVVQEEEEEVEEEEEEEEEEDDEDD. Residues 84–120 form a disordered region; sequence EDDVVQEEEEEVEEEEEEEEEEDDEDDHVSVKRKYNF.

This sequence belongs to the ELOF1 family.

The protein resides in the nucleus. Its function is as follows. Transcription elongation factor implicated in the maintenance of proper chromatin structure in actively transcribed regions. The protein is Transcription elongation factor 1 homolog of Arabidopsis thaliana (Mouse-ear cress).